The following is a 284-amino-acid chain: Tropomyosin alpha-1 chain (284 aa).

A disordered region spans residues 1–40 (MDAIKKKMQMLKLDKENALDRAEQAEADKKGAEDKSKQLE). A coiled-coil region spans residues 1–284 (MDAIKKKMQM…DHALNDMTSI (284 aa)). Residues 12-40 (KLDKENALDRAEQAEADKKGAEDKSKQLE) show a composition bias toward basic and acidic residues.

This sequence belongs to the tropomyosin family. In terms of assembly, homodimer. Heterodimer of an alpha (TPM1, TPM3 or TPM4) and a beta (TPM2) chain.

It localises to the cytoplasm. The protein localises to the cytoskeleton. In terms of biological role, binds to actin filaments in muscle and non-muscle cells. Plays a central role, in association with the troponin complex, in the calcium dependent regulation of vertebrate striated muscle contraction. Smooth muscle contraction is regulated by interaction with caldesmon. In non-muscle cells is implicated in stabilizing cytoskeleton actin filaments. This chain is Tropomyosin alpha-1 chain (tpm1), found in Rana temporaria (European common frog).